The primary structure comprises 254 residues: Protein PET122, mitochondrial (254 aa).

The N-terminal 8 residues, 1-8, are a transit peptide targeting the mitochondrion; sequence MLTITKRL. The interval 185–254 is essential for PET122 function; that stretch reads QAAALALFGR…IKRRGFEINT (70 aa).

The protein resides in the mitochondrion inner membrane. Required for expression of the mitochondrial gene for cytochrome c oxidase subunit 3 (COX3). PET122 seems to work by directly interacting with the small ribosomal subunit to promote translation initiation on the COX3 mRNA. This Saccharomyces cerevisiae (strain ATCC 204508 / S288c) (Baker's yeast) protein is Protein PET122, mitochondrial (PET122).